A 122-amino-acid chain; its full sequence is Large ribosomal subunit protein uL14 (122 aa).

Belongs to the universal ribosomal protein uL14 family. In terms of assembly, part of the 50S ribosomal subunit. Forms a cluster with proteins L3 and L19. In the 70S ribosome, L14 and L19 interact and together make contacts with the 16S rRNA in bridges B5 and B8.

Its function is as follows. Binds to 23S rRNA. Forms part of two intersubunit bridges in the 70S ribosome. The sequence is that of Large ribosomal subunit protein uL14 from Nitrosomonas europaea (strain ATCC 19718 / CIP 103999 / KCTC 2705 / NBRC 14298).